The primary structure comprises 425 residues: Histidine--tRNA ligase (425 aa).

Belongs to the class-II aminoacyl-tRNA synthetase family. As to quaternary structure, homodimer.

It localises to the cytoplasm. The catalysed reaction is tRNA(His) + L-histidine + ATP = L-histidyl-tRNA(His) + AMP + diphosphate + H(+). The chain is Histidine--tRNA ligase from Streptomyces coelicolor (strain ATCC BAA-471 / A3(2) / M145).